We begin with the raw amino-acid sequence, 858 residues long: Elongation factor 2 (858 aa).

The region spanning 17–362 (ANIRNMSVIA…MITIHLPSPV (346 aa)) is the tr-type G domain. A GTP-binding site is contributed by 26-33 (AHVDHGKS). Thr-54 carries the post-translational modification Phosphothreonine. Thr-57 is subject to Phosphothreonine; by EEF2K. Thr-59 carries the post-translational modification Phosphothreonine. Lys-152 bears the N6-succinyllysine mark. GTP is bound by residues 158–161 (NKMD) and 216–218 (SGL). At Lys-235 the chain carries N6-acetyllysine. Lys-239 carries the post-translational modification N6-acetyllysine; alternate. Lys-239 participates in a covalent cross-link: Glycyl lysine isopeptide (Lys-Gly) (interchain with G-Cter in SUMO1); alternate. Position 265 is a phosphotyrosine; by CSK (Tyr-265). N6-acetyllysine; alternate is present on Lys-272. N6-succinyllysine; alternate is present on Lys-272. At Lys-275 the chain carries N6-acetyllysine. Lys-322 is covalently cross-linked (Glycyl lysine isopeptide (Lys-Gly) (interchain with G-Cter in SUMO)). The residue at position 325 (Ser-325) is a Phosphoserine. At Tyr-373 the chain carries Phosphotyrosine; by CSK. Phosphothreonine is present on Thr-435. N6-acetyllysine occurs at positions 439 and 445. Phosphoserine is present on Ser-502. Lys-525 is modified (N6,N6,N6-trimethyllysine; by EEF2KMT). Lys-529 is covalently cross-linked (Glycyl lysine isopeptide (Lys-Gly) (interchain with G-Cter in SUMO)). Lys-572 carries the post-translational modification N6-succinyllysine. Ser-595 carries the phosphoserine; by CDK2 modification. Lys-619 is modified (N6-acetyllysine). Residue His-715 is modified to Diphthamide.

The protein belongs to the TRAFAC class translation factor GTPase superfamily. Classic translation factor GTPase family. EF-G/EF-2 subfamily. Binds to 80S ribosomes. Actively translating ribosomes show mutually exclusive binding of eIF5a (EIF5A or EIF5A2) and EEF2/eEF2. Interacts with SERBP1; interaction sequesters EEF2/eEF2 at the A-site of the ribosome, thereby blocking the interaction sites of the mRNA-tRNA complex, promoting ribosome stabilization and hibernation. Interacts with HABP4; interaction takes place at the A-site of hibernating ribosomes and promotes ribosome stabilization. Component of the mRNA surveillance SURF complex, at least composed of ERF1, ERF3 (ERF3A or ERF3B), EEF2, UPF1/RENT1, SMG1, SMG8 and SMG9. Interacts with RBPMS2. Phosphorylation by EF-2 kinase completely inactivates EF-2; it requires prior phosphorylation by CDK2 at Ser-595 during mitotic prometaphase. Phosphorylation by CSK promotes SUMOylation, proteolytic cleavage, and nuclear translocation if the C-terminal fragment. In terms of processing, diphthamide is 2-[3-carboxyamido-3-(trimethyl-ammonio)propyl]histidine. Post-translationally, ISGylated. Proteolytically processed at two sites following phosphorylation by CSK. In terms of processing, SUMOylated following phosphorylation by CSK, promotes proteolytic cleavage.

It is found in the cytoplasm. Its subcellular location is the nucleus. The catalysed reaction is GTP + H2O = GDP + phosphate + H(+). In terms of biological role, catalyzes the GTP-dependent ribosomal translocation step during translation elongation. During this step, the ribosome changes from the pre-translocational (PRE) to the post-translocational (POST) state as the newly formed A-site-bound peptidyl-tRNA and P-site-bound deacylated tRNA move to the P and E sites, respectively. Catalyzes the coordinated movement of the two tRNA molecules, the mRNA and conformational changes in the ribosome. This chain is Elongation factor 2 (EEF2), found in Callithrix jacchus (White-tufted-ear marmoset).